We begin with the raw amino-acid sequence, 182 residues long: uncharacterized protein (182 aa).

Helical transmembrane passes span 19–39, 51–71, 87–107, and 118–138; these read LFGI…SIVS, IYLV…VVFI, IFTV…IELF, and CSPF…LAMC.

Its subcellular location is the membrane. This is an uncharacterized protein from Caenorhabditis elegans.